Reading from the N-terminus, the 135-residue chain is Ribosome-binding factor A (135 aa).

This sequence belongs to the RbfA family. As to quaternary structure, monomer. Binds 30S ribosomal subunits, but not 50S ribosomal subunits or 70S ribosomes.

The protein localises to the cytoplasm. Functionally, one of several proteins that assist in the late maturation steps of the functional core of the 30S ribosomal subunit. Associates with free 30S ribosomal subunits (but not with 30S subunits that are part of 70S ribosomes or polysomes). Required for efficient processing of 16S rRNA. May interact with the 5'-terminal helix region of 16S rRNA. This is Ribosome-binding factor A from Rhizobium meliloti (strain 1021) (Ensifer meliloti).